A 264-amino-acid chain; its full sequence is S-adenosylmethionine decarboxylase proenzyme (264 aa).

The active-site Schiff-base intermediate with substrate; via pyruvic acid is the Ser-113. Position 113 is a pyruvic acid (Ser); by autocatalysis (Ser-113). The active-site Proton acceptor; for processing activity is the His-118. Cys-141 functions as the Proton donor; for catalytic activity in the catalytic mechanism.

It belongs to the prokaryotic AdoMetDC family. Type 2 subfamily. Heterooctamer of four alpha and four beta chains arranged as a tetramer of alpha/beta heterodimers. The cofactor is pyruvate. Is synthesized initially as an inactive proenzyme. Formation of the active enzyme involves a self-maturation process in which the active site pyruvoyl group is generated from an internal serine residue via an autocatalytic post-translational modification. Two non-identical subunits are generated from the proenzyme in this reaction, and the pyruvate is formed at the N-terminus of the alpha chain, which is derived from the carboxyl end of the proenzyme. The post-translation cleavage follows an unusual pathway, termed non-hydrolytic serinolysis, in which the side chain hydroxyl group of the serine supplies its oxygen atom to form the C-terminus of the beta chain, while the remainder of the serine residue undergoes an oxidative deamination to produce ammonia and the pyruvoyl group blocking the N-terminus of the alpha chain.

The enzyme catalyses S-adenosyl-L-methionine + H(+) = S-adenosyl 3-(methylsulfanyl)propylamine + CO2. The protein operates within amine and polyamine biosynthesis; S-adenosylmethioninamine biosynthesis; S-adenosylmethioninamine from S-adenosyl-L-methionine: step 1/1. In terms of biological role, catalyzes the decarboxylation of S-adenosylmethionine to S-adenosylmethioninamine (dcAdoMet), the propylamine donor required for the synthesis of the polyamines spermine and spermidine from the diamine putrescine. The protein is S-adenosylmethionine decarboxylase proenzyme of Pseudomonas syringae pv. tomato (strain ATCC BAA-871 / DC3000).